Consider the following 126-residue polypeptide: Small ribosomal subunit protein eS24 (126 aa).

Residues 98-126 form a disordered region; the sequence is LYTKPQTSRKQRKEKKNRLKKAGKKTAKK. Over residues 104 to 126 the composition is skewed to basic residues; sequence TSRKQRKEKKNRLKKAGKKTAKK.

It belongs to the eukaryotic ribosomal protein eS24 family.

The protein is Small ribosomal subunit protein eS24 (rps24) of Dictyostelium discoideum (Social amoeba).